Consider the following 440-residue polypeptide: Zinc finger MYND domain-containing protein 10 (440 aa).

The interaction with DNAAF11 stretch occupies residues 366–440 (QDLRLQARRW…VLAAQGDRAK (75 aa)). Zn(2+) is bound by residues Cys394, Cys397, Cys405, Cys408, Cys414, Cys418, His426, and Cys430. Residues 394–430 (CAYCSAEASKRCSRCQNEWYCCRECQVKHWEKHGKTC) form an MYND-type zinc finger.

It belongs to the ZMYND10 family. In terms of assembly, interacts (via C-terminus) with DNAAF11 (via CS domain); this interaction stabilizes DNAAF11 at the protein level. Interacts (via C-terminus) with DNAL1; this interaction stabilizes DNAL1 at the protein level. Interacts with DNAAF4, HSPA8, IQUB, RUVBL2 and DYNTL5.

The protein resides in the cytoplasm. Its subcellular location is the cytoskeleton. It is found in the microtubule organizing center. It localises to the centrosome. The protein localises to the centriolar satellite. The protein resides in the apical cell membrane. Its subcellular location is the dynein axonemal particle. In terms of biological role, plays a role in axonemal structure organization and motility. Involved in axonemal pre-assembly of inner and outer dynein arms (IDA and ODA, respectively) for proper axoneme building for cilia motility. May act by indirectly regulating transcription of dynein proteins. The sequence is that of Zinc finger MYND domain-containing protein 10 from Homo sapiens (Human).